Consider the following 478-residue polypeptide: Glycogen synthase (478 aa).

Lysine 15 is an ADP-alpha-D-glucose binding site.

This sequence belongs to the glycosyltransferase 1 family. Bacterial/plant glycogen synthase subfamily.

It catalyses the reaction [(1-&gt;4)-alpha-D-glucosyl](n) + ADP-alpha-D-glucose = [(1-&gt;4)-alpha-D-glucosyl](n+1) + ADP + H(+). It participates in glycan biosynthesis; glycogen biosynthesis. Functionally, synthesizes alpha-1,4-glucan chains using ADP-glucose. This chain is Glycogen synthase, found in Streptococcus uberis (strain ATCC BAA-854 / 0140J).